We begin with the raw amino-acid sequence, 264 residues long: Probable metallo-hydrolase YflN (264 aa).

Residues His-80, His-82, Asp-84, His-85, His-169, Asp-188, and His-241 each coordinate Zn(2+).

It belongs to the metallo-beta-lactamase superfamily. The cofactor is Zn(2+).

The chain is Probable metallo-hydrolase YflN (yflN) from Bacillus subtilis (strain 168).